We begin with the raw amino-acid sequence, 417 residues long: Serine hydroxymethyltransferase (417 aa).

(6S)-5,6,7,8-tetrahydrofolate contacts are provided by residues L121 and 125–127; that span reads GHL. At K229 the chain carries N6-(pyridoxal phosphate)lysine. 355–357 serves as a coordination point for (6S)-5,6,7,8-tetrahydrofolate; that stretch reads SPF.

Belongs to the SHMT family. In terms of assembly, homodimer. Pyridoxal 5'-phosphate is required as a cofactor.

Its subcellular location is the cytoplasm. The catalysed reaction is (6R)-5,10-methylene-5,6,7,8-tetrahydrofolate + glycine + H2O = (6S)-5,6,7,8-tetrahydrofolate + L-serine. The protein operates within one-carbon metabolism; tetrahydrofolate interconversion. Its pathway is amino-acid biosynthesis; glycine biosynthesis; glycine from L-serine: step 1/1. Catalyzes the reversible interconversion of serine and glycine with tetrahydrofolate (THF) serving as the one-carbon carrier. This reaction serves as the major source of one-carbon groups required for the biosynthesis of purines, thymidylate, methionine, and other important biomolecules. Also exhibits THF-independent aldolase activity toward beta-hydroxyamino acids, producing glycine and aldehydes, via a retro-aldol mechanism. The polypeptide is Serine hydroxymethyltransferase (Yersinia pestis bv. Antiqua (strain Antiqua)).